The primary structure comprises 203 residues: Glycerol-3-phosphate acyltransferase 1 (203 aa).

The next 6 membrane-spanning stretches (helical) occupy residues 2 to 22, 52 to 72, 82 to 102, 117 to 137, 150 to 168, and 170 to 190; these read LNFF…SHII, GFPA…FFVW, VIAF…FLKF, VLTK…FSIL, EDAF…YTMW, and VFNG…IVFY.

This sequence belongs to the PlsY family. Probably interacts with PlsX.

The protein resides in the cell inner membrane. The catalysed reaction is an acyl phosphate + sn-glycerol 3-phosphate = a 1-acyl-sn-glycero-3-phosphate + phosphate. Its pathway is lipid metabolism; phospholipid metabolism. Functionally, catalyzes the transfer of an acyl group from acyl-phosphate (acyl-PO(4)) to glycerol-3-phosphate (G3P) to form lysophosphatidic acid (LPA). This enzyme utilizes acyl-phosphate as fatty acyl donor, but not acyl-CoA or acyl-ACP. This Thermotoga maritima (strain ATCC 43589 / DSM 3109 / JCM 10099 / NBRC 100826 / MSB8) protein is Glycerol-3-phosphate acyltransferase 1.